Here is a 137-residue protein sequence, read N- to C-terminus: Proofreading thioesterase EntH (137 aa).

Catalysis depends on E63, which acts as the Nucleophile or proton acceptor.

Belongs to the thioesterase PaaI family. In terms of assembly, homotetramer. Dimer of dimers. Interacts specifically with the aryl carrier protein (ArCP) domain of EntB.

The protein localises to the cytoplasm. Its pathway is siderophore biosynthesis; enterobactin biosynthesis. Functionally, required for optimal enterobactin synthesis. Acts as a proofreading enzyme that prevents EntB misacylation by hydrolyzing the thioester bound existing between EntB and wrongly charged molecules. In Shigella sonnei (strain Ss046), this protein is Proofreading thioesterase EntH.